We begin with the raw amino-acid sequence, 90 residues long: Small ribosomal subunit protein bS16 (90 aa).

The protein belongs to the bacterial ribosomal protein bS16 family.

The polypeptide is Small ribosomal subunit protein bS16 (Geobacillus kaustophilus (strain HTA426)).